The chain runs to 485 residues: GlcNAc-binding protein A (485 aa).

Positions 1-23 (MKKQPKMTAIALILSGISGLAYG) are cleaved as a signal peptide. Residues 24 to 201 (HGYVSAVENG…SFYNVIDVKF (178 aa)) enclose the Chitin-binding type-4 domain. One can recognise a Chitin-binding type-3 domain in the interval 437 to 478 (AGTKVLASDGAIYQCKPWPYSGYCQQWTSNATQYQPGTGSHW).

This sequence belongs to the GbpA family.

The protein resides in the secreted. Functionally, probably interacts with GlcNAc residues. May promote attachment to both epithelial cell surfaces and chitin. This is GlcNAc-binding protein A from Vibrio cholerae serotype O1 (strain M66-2).